Reading from the N-terminus, the 469-residue chain is MLSLSHPHPHPASTTAAAAARHHHRRNAPFAPHHRRRRRFAHLTTSAVILGPDGRPIGGGPRDNKLPFTPPPTAPPDQLYQPFHPPPSPLPDKYKDLDLGQRLAVLRDRLGLWHEYAPLISALSREGFTPSSIEEATGISGVEQNSVVVATQVRDSLVADEGGFPAELLRYFDSYGGPELLYELRFLNARQRADAARHAIDRRLEPRGVRELARSMKDFPQRRGDDGWEAFTRDNPGDCLAFARFRQSREAIDAEDSVAELERALEVVDTEPARARVEAELDRARRKAAGEEVDDEDGAANAAAAASRPAVPVVRLMYGEVAEATTVLLLPVVREGDGGEALAHAPRRTRTDADLGMVEVDKGWTRWAVVPGWGPVAEVAGEAVVIELADGRTLPWRSAEAERVLVVANRGRREVVEDGIYVVEREGRLVVEKGRKLAAEGVGEAAAEVLVVVRPPRDEDDMISDDEWD.

A chloroplast-targeting transit peptide spans 1–46; that stretch reads MLSLSHPHPHPASTTAAAAARHHHRRNAPFAPHHRRRRRFAHLTTS. Residues 1 to 78 are disordered; that stretch reads MLSLSHPHPH…TPPPTAPPDQ (78 aa). Positions 20–41 are enriched in basic residues; the sequence is ARHHHRRNAPFAPHHRRRRRFA. The interval 90-281 is N-terminal alpha-helix; that stretch reads LPDKYKDLDL…PARARVEAEL (192 aa). Residues 246-294 are a coiled coil; it reads RQSREAIDAEDSVAELERALEVVDTEPARARVEAELDRARRKAAGEEVD. The tract at residues 311–456 is C-terminal beta sheet; that stretch reads VPVVRLMYGE…AEVLVVVRPP (146 aa).

It belongs to the RAF family.

It is found in the plastid. The protein resides in the chloroplast. In terms of biological role, required for assembly or stability of RuBisCO. Acts at a postchaperonin step to fold and/or assemble the large subunit (LS) into RuBisCO. The polypeptide is Rubisco accumulation factor 1, chloroplastic (RAF1) (Oryza sativa subsp. japonica (Rice)).